The primary structure comprises 158 residues: Probable host range protein 2-1 (158 aa).

Belongs to the poxviridae C7 protein family.

Functionally, plays a role for multiplication of the virus in different cell types. The chain is Probable host range protein 2-1 from Rabbit fibroma virus (strain Kasza) (RFV).